Reading from the N-terminus, the 242-residue chain is Anti-Pycsar protein Apyc1 (242 aa).

Residues 17-216 (FNNNALIEQD…EMQSIIKLMH (200 aa)) form a beta-lactamase-like region. Zn(2+) is bound by residues His-59, His-61, Asp-63, His-64, His-142, Asp-162, and His-216.

It belongs to the anti-Pycsar protein Apyc1 family. Homodimer. The cofactor is Zn(2+).

It carries out the reaction 3',5'-cyclic CMP + H2O = CMP + H(+). It catalyses the reaction 3',5'-cyclic UMP + H2O = UMP + H(+). Counteracts the endogenous Pycsar antiviral defense system. Phosphodiesterase that enables metal-dependent hydrolysis of host cyclic nucleotide Pycsar defense signals such as cCMP and cUMP. The chain is Anti-Pycsar protein Apyc1 from Saccharibacillus brassicae.